A 381-amino-acid polypeptide reads, in one-letter code: Succinyl-diaminopimelate desuccinylase (381 aa).

Histidine 72 is a Zn(2+) binding site. The active site involves aspartate 74. Aspartate 103 lines the Zn(2+) pocket. The active-site Proton acceptor is the glutamate 133. 3 residues coordinate Zn(2+): glutamate 134, glutamate 163, and histidine 348.

The protein belongs to the peptidase M20A family. DapE subfamily. In terms of assembly, homodimer. Zn(2+) serves as cofactor. The cofactor is Co(2+).

It catalyses the reaction N-succinyl-(2S,6S)-2,6-diaminopimelate + H2O = (2S,6S)-2,6-diaminopimelate + succinate. Its pathway is amino-acid biosynthesis; L-lysine biosynthesis via DAP pathway; LL-2,6-diaminopimelate from (S)-tetrahydrodipicolinate (succinylase route): step 3/3. In terms of biological role, catalyzes the hydrolysis of N-succinyl-L,L-diaminopimelic acid (SDAP), forming succinate and LL-2,6-diaminopimelate (DAP), an intermediate involved in the bacterial biosynthesis of lysine and meso-diaminopimelic acid, an essential component of bacterial cell walls. The sequence is that of Succinyl-diaminopimelate desuccinylase from Anaplasma marginale (strain Florida).